The sequence spans 217 residues: Adenylate kinase (217 aa).

An ATP-binding site is contributed by 10-15 (GIGKGT). Positions 30–59 (STGDIFRKNFKENTELGTLSKKFIAQGLLV) are NMP. Residues T31, R36, 57 to 59 (LLV), 85 to 88 (GFPR), and Q92 contribute to the AMP site. The tract at residues 126 to 163 (GRRICPECGKVYHIEKIPPKNPGICDKDQKTLIQREDD) is LID. R127 is a binding site for ATP. C130 and C133 together coordinate Zn(2+). 136–137 (VY) contacts ATP. Residues C150 and D153 each coordinate Zn(2+). The AMP site is built by R160 and R171. An ATP-binding site is contributed by Q199.

It belongs to the adenylate kinase family. Monomer.

It localises to the cytoplasm. It carries out the reaction AMP + ATP = 2 ADP. It participates in purine metabolism; AMP biosynthesis via salvage pathway; AMP from ADP: step 1/1. Functionally, catalyzes the reversible transfer of the terminal phosphate group between ATP and AMP. Plays an important role in cellular energy homeostasis and in adenine nucleotide metabolism. This Aster yellows witches'-broom phytoplasma (strain AYWB) protein is Adenylate kinase.